Here is a 351-residue protein sequence, read N- to C-terminus: MLKFIQNNREGTALLAILTLFALLGIIDRNYFSLQTFTMIFSSAQILILLAIGATLVMLTRNIDVSVGSITGLCAVTVGMALNAGFGLAASCLFALLVGMVAGFFNGILVTWLRIPAIVATLGTLGLYRGLMLLLTGGKWIEGLPADLKSLSTPILFSISPIGWLTMLLILAMAWLLGKTAFGRSFYATGDNLQGARQLGVRTDSLRIFAFSMNGVMAALAGIVFASQIGFIPNQTGNGLEMKAIAACVLGGISLLGGTGTIIGAILGAFLLTQIDSVLVLLRLPAWWNDFIAGLVLLGVLVFDGRLRCAVERNIRQQKYARFTAQAIISDKKPTVSDNNPAASNKKKAAL.

A run of 9 helical transmembrane segments spans residues 14–34 (LLAI…YFSL), 39–59 (MIFS…LVML), 70–90 (ITGL…GLAA), 93–113 (LFAL…VTWL), 115–135 (IPAI…MLLL), 155–175 (ILFS…AMAW), 213–233 (MNGV…GFIP), 252–272 (GISL…AFLL), and 284–304 (LPAW…LVFD).

It belongs to the binding-protein-dependent transport system permease family. AraH/RbsC subfamily. As to quaternary structure, the complex is composed of two ATP-binding proteins (LsrA), two transmembrane proteins (LsrC and LsrD) and a solute-binding protein (LsrB).

The protein resides in the cell inner membrane. In terms of biological role, part of the ABC transporter complex LsrABCD involved in autoinducer 2 (AI-2) import. Probably responsible for the translocation of the substrate across the membrane. The protein is Autoinducer 2 import system permease protein LsrC (lsrC) of Yersinia pestis bv. Antiqua (strain Antiqua).